The sequence spans 2486 residues: Nonribosomal peptide synthetase nanA (2486 aa).

The tract at residues 231–637 is adenylation 1; the sequence is FSARQPLSPA…GRRGTQVKLR (407 aa). In terms of domain architecture, Carrier 1 spans 786 to 860; the sequence is TDIELKVHAL…DLARSAKETS (75 aa). At Ser-820 the chain carries O-(pantetheine 4'-phosphoryl)serine. Positions 902-1314 are condensation 1; that stretch reads EDAYPCTPLQ…LKSVPRVSSQ (413 aa). An adenylation 2 region spans residues 1339–1735; it reads RAQARKTPLA…GRIGDQMKIR (397 aa). 2 consecutive Carrier domains span residues 1872–1948 and 2404–2480; these read PPST…SSAS and SSSE…QTQA. O-(pantetheine 4'-phosphoryl)serine is present on residues Ser-1909 and Ser-2441. A condensation 2 region spans residues 2404 to 2480; it reads SSSETIVEPL…KLARLLQTQA (77 aa).

The protein belongs to the NRP synthetase family.

Its pathway is secondary metabolite biosynthesis. Functionally, nonribosomal peptide synthetase; part of the gene cluster that mediates the biosynthesis of the benzazepine alkaloid nanangelenin A which contains an unprecedented 3,4-dihydro-1-benzazepine-2,5-dione-N-prenyl-N-acetoxy-anthranilamide scaffold. The first step of nanangelenin biosynthesis is catalyzed by the indoleamine 2,3-dioxygenase nanC which produces N-formyl-kynurenine through the catabolism of tryptophan. The two-module NRPS nanA then utilizes anthranilate (Ant) and L-kynurenine (L-Kyn) to assemble the dipeptide product nanangelenin B. The first adenylation domain of nanA (A1) loads anthranilate onto the T1 domain, while A2 loads kynurenine, generated through spontaneous nonenzymatic deformylation of the nanC-supplied N-formyl-kynurenine. The peptide bond formation between the tethered amino acids is catalyzed by the first condensation domain (C1) between anthranilate's carbonyl carbon and kynurenine's aliphatic primary amine. The second C domain (C2) catalyzes the final cyclization event between the aromatic amine of kynurenine and the tethered carbonyl carbon, yielding nanangelenin B. The terminal T3 domain enhances the catalytic efficiency of C2, suggesting the T2-tethered Ant-L-Kyn is transferred to T3 prior to cyclization by C2. Once released from nanA, nanangelenin B is then prenylated by the prenyltransferase nanD to form nanangelenin C. Nanangelenin C is then N-hydroxylated by the FAD-dependent monooxygenase nanF and further acetylated by the acetyltransferase nanB to yield nanangelenin F. Finally, the N-methyltransferase nanE methylates the amide nitrogen of 1-benzazepine to convert nanangelenin F into nanangelenin A. NanE is also able to methylate most of the intermediates of the pathway such as nanangelenin B and nanangelenin C to produce nanangelenin D and nanangelenin E, respectively. This chain is Nonribosomal peptide synthetase nanA, found in Aspergillus nanangensis.